A 65-amino-acid chain; its full sequence is Small ribosomal subunit protein bS21 (65 aa).

A disordered region spans residues Gly-45–Ser-65. Positions Lys-48 to Gln-57 are enriched in basic residues.

It belongs to the bacterial ribosomal protein bS21 family.

This chain is Small ribosomal subunit protein bS21, found in Chlorobium luteolum (strain DSM 273 / BCRC 81028 / 2530) (Pelodictyon luteolum).